We begin with the raw amino-acid sequence, 570 residues long: NADPH oxidase 2 (570 aa).

Residues 2 to 9 (GNWAVNEG) lie on the Cytoplasmic side of the membrane. The helical transmembrane segment at 10 to 36 (LSIFVILVWLGLNVFLFVWYYRVYDIP) threads the bilayer. Over 37–46 (PKFFYTRKLL) the chain is Extracellular. A helical membrane pass occupies residues 47–72 (GSALALARAPAACLNFNCMLILLPVC). The Ferric oxidoreductase domain occupies 54–286 (RAPAACLNFN…MFLYLCERLV (233 aa)). Residues 73-95 (RNLLSFLRGSSACCSTRVRRQLD) lie on the Cytoplasmic side of the membrane. Residues 96 to 130 (RNLTFHKMVAWMIALHSAIHTIAHLFNVEWCVNAR) traverse the membrane as a helical segment. Positions 101 and 115 each coordinate heme b. Topologically, residues 131-163 (VNNSDPYSVALSELGDRQNESYLNFARKRIKNP) are extracellular. N-linked (GlcNAc...) asparagine glycans are attached at residues Asn132 and Asn149. Residue Lys161 forms a Glycyl lysine isopeptide (Lys-Gly) (interchain with G-Cter in ubiquitin) linkage. Residues 164-194 (EGGLYLAVTLLAGITGVVITLCLILIITSST) form a helical membrane-spanning segment. Residues 195 to 203 (KTIRRSYFE) are Cytoplasmic-facing. Residues Arg199 and Ser200 each coordinate FAD. Residues 204-222 (VFWYTHHLFVIFFIGLAIH) form a helical membrane-spanning segment. 5 residues coordinate heme b: Trp206, His209, His222, Arg226, and Ile227. Topologically, residues 223 to 267 (GAERIVRGQTAESLAVHNITVCEQKISEWGKIKECPIPQFAGNPP) are extracellular. Asn240 carries an N-linked (GlcNAc...) asparagine glycan. Lys255 is covalently cross-linked (Glycyl lysine isopeptide (Lys-Gly) (interchain with G-Cter in ubiquitin)). The heme b site is built by Met268, Tyr280, and Arg287. The chain crosses the membrane as a helical span at residues 268–285 (MTWKWIVGPMFLYLCERL). Topologically, residues 286 to 570 (VRFWRSQQKV…VHFIFNKENF (285 aa)) are cytoplasmic. Positions 287–397 (RFWRSQQKVV…DGPFGTASED (111 aa)) constitute an FAD-binding FR-type domain. Glycyl lysine isopeptide (Lys-Gly) (interchain with G-Cter in ubiquitin) cross-links involve residues Lys294, Lys299, Lys306, Lys328, and Lys334. FAD is bound by residues Trp337, His338, Pro339, Thr341, His354, Arg356, Trp361, and Thr362. Residue Lys381 forms a Glycyl lysine isopeptide (Lys-Gly) (interchain with G-Cter in ubiquitin) linkage. Residues Ile411, Arg446, and Thr481 each coordinate NADPH. A Glycyl lysine isopeptide (Lys-Gly) (interchain with G-Cter in ubiquitin) cross-link involves residue Lys506. NADPH is bound at residue Arg513. Lys567 is covalently cross-linked (Glycyl lysine isopeptide (Lys-Gly) (interchain with G-Cter in ubiquitin)).

Component of the phagocyte NADPH oxidase core complex/cytochrome b558 complex, composed of CYBB (heavy chain (beta)) and CYBA (light chain (alpha)). Component of the phagocyte NADPH oxidase complex composed of an obligatory core heterodimer formed by the membrane proteins CYBA and CYBB and the cytosolic regulatory subunits NCF1/p47-phox, NCF2/p67-phox, NCF4/p40-phox and the small GTPase RAC1 or RAC2. Interacts with NCF1 (phosphorylated form). Interacts with NCF2; the interaction is enhanced in the presence of GBP7. Interacts with RAC2. Interacts with RAC1. Interacts with calprotectin (S100A8/9). Interacts with NRROS; the interaction is direct and impairs formation of a stable NADPH oxidase complex. Interacts with CYBC1; CYBC1 may act as a chaperone stabilizing Cytochrome b-245 heterodimer. The CYBA-CYBB complex interacts with GBP7. The cofactor is FAD. Glycosylated. In terms of processing, phosphorylated on Ser and Thr residues by PKC during neutrophils activation. Phosphorylation enhances the NADPH oxidase activity and stimulates its interaction with RAC2, NCF2/p67-phox, and NCF1/p47-phox. Post-translationally, undergoes 'Lys-48'-linked polyubiquitination, likely by RNF145, triggering endoplasmic reticulum-associated degradation. Detected in neutrophils (at protein level).

The protein localises to the cell membrane. It catalyses the reaction NADPH + 2 O2 = 2 superoxide + NADP(+) + H(+). In terms of biological role, catalytic subunit of the phagocyte NADPH oxidase complex that mediates the transfer of electrons from cytosolic NADPH to O2 to produce the superoxide anion (O2(-)). In the activated complex, electrons are first transferred from NADPH to flavin adenine dinucleotide (FAD) and subsequently transferred via two heme molecules to molecular oxygen, producing superoxide through an outer-sphere reaction. Activation of the NADPH oxidase complex is initiated by the assembly of cytosolic subunits of the NADPH oxidase complex with the core NADPH oxidase complex to form a complex at the plasma membrane or phagosomal membrane. This activation process is initiated by phosphorylation dependent binding of the cytosolic NCF1/p47-phox subunit to the C-terminus of CYBA/p22-phox. NADPH oxidase complex assembly is impaired through interaction with NRROS. In Homo sapiens (Human), this protein is NADPH oxidase 2.